Consider the following 558-residue polypeptide: Oxygen-dependent choline dehydrogenase (558 aa).

8 to 37 contributes to the FAD binding site; the sequence is DYIIIGAGSAGNVLATRLTEDSDVSVLLLE. Histidine 475 functions as the Proton acceptor in the catalytic mechanism.

Belongs to the GMC oxidoreductase family. The cofactor is FAD.

It catalyses the reaction choline + A = betaine aldehyde + AH2. The catalysed reaction is betaine aldehyde + NAD(+) + H2O = glycine betaine + NADH + 2 H(+). Its pathway is amine and polyamine biosynthesis; betaine biosynthesis via choline pathway; betaine aldehyde from choline (cytochrome c reductase route): step 1/1. Functionally, involved in the biosynthesis of the osmoprotectant glycine betaine. Catalyzes the oxidation of choline to betaine aldehyde and betaine aldehyde to glycine betaine at the same rate. This Chromohalobacter salexigens (strain ATCC BAA-138 / DSM 3043 / CIP 106854 / NCIMB 13768 / 1H11) protein is Oxygen-dependent choline dehydrogenase.